Reading from the N-terminus, the 70-residue chain is U2-agatoxin-Ao1m (70 aa).

A signal peptide spans 1-20; sequence MRAIISLFLISAMVFSMIQA. A propeptide spanning residues 21–34 is cleaved from the precursor; the sequence is VPEEXGLQLSEDER. Disulfide bonds link C37-C53, C44-C58, and C52-C68. L69 carries the leucine amide modification.

The protein belongs to the neurotoxin 01 (U2-agtx) family. Expressed by the venom gland.

Its subcellular location is the secreted. Its function is as follows. Insect active toxin causing rapid but reversible paralysis in crickets. No activity shown in mammals. Does not show effect on mammalian voltage-gated calcium channels. The chain is U2-agatoxin-Ao1m from Agelena orientalis (Funnel-web spider).